The chain runs to 321 residues: Probable membrane-associated kinase regulator 3 (321 aa).

Residues 297–314 are compositionally biased toward polar residues; sequence KSNVTESELCSSRTSVST. Residues 297 to 321 form a disordered region; it reads KSNVTESELCSSRTSVSTCGDLDKD.

Its subcellular location is the cell membrane. This chain is Probable membrane-associated kinase regulator 3 (MAKR3), found in Arabidopsis thaliana (Mouse-ear cress).